A 421-amino-acid chain; its full sequence is UDP-N-acetylglucosamine 1-carboxyvinyltransferase (421 aa).

Residue 22–23 (KN) coordinates phosphoenolpyruvate. Residue Arg-93 participates in UDP-N-acetyl-alpha-D-glucosamine binding. The active-site Proton donor is the Cys-117. Residue Cys-117 is modified to 2-(S-cysteinyl)pyruvic acid O-phosphothioketal. UDP-N-acetyl-alpha-D-glucosamine-binding positions include 122–126 (RPVDL), Asp-308, and Ile-330.

Belongs to the EPSP synthase family. MurA subfamily.

It localises to the cytoplasm. It carries out the reaction phosphoenolpyruvate + UDP-N-acetyl-alpha-D-glucosamine = UDP-N-acetyl-3-O-(1-carboxyvinyl)-alpha-D-glucosamine + phosphate. The protein operates within cell wall biogenesis; peptidoglycan biosynthesis. In terms of biological role, cell wall formation. Adds enolpyruvyl to UDP-N-acetylglucosamine. This chain is UDP-N-acetylglucosamine 1-carboxyvinyltransferase, found in Pseudomonas fluorescens (strain SBW25).